The sequence spans 471 residues: POU domain protein 2 (471 aa).

Over residues 1–18 (CGKSYEEEEEEEDDELEA) the composition is skewed to acidic residues. Disordered stretches follow at residues 1 to 32 (CGKS…SARQ) and 149 to 238 (DQQL…PKPL). The segment covering 165–180 (STPLSKSPLRSPSLSP) has biased composition (low complexity). Residues 186–196 (EPQQAQRTPPN) show a composition bias toward polar residues. Residues 197–230 (SLAAAGLGLSSAVLTPNTPSMQQQQQQTMTSTTN) show a composition bias toward low complexity. Residues 257 to 331 (EETTDLEELE…LLQKWLEDAD (75 aa)) form the POU-specific domain. A DNA-binding region (homeobox) is located at residues 362 to 421 (RRKKRTSIETTIRGALEQAFVLNCKPTSEEINQLSERLHMDKEVVRVWFCNRRQKEKRIN).

Belongs to the POU transcription factor family. Class-2 subfamily.

The protein resides in the nucleus. In terms of biological role, DNA-binding regulatory protein implicated in early development. Involved in neuronal cell fate decision. May act as an octamer-dependent activator of transcription. The chain is POU domain protein 2 (pdm2) from Drosophila virilis (Fruit fly).